The chain runs to 145 residues: D-aminoacyl-tRNA deacylase (145 aa).

Residues 137–138 (GP) carry the Gly-cisPro motif, important for rejection of L-amino acids motif.

This sequence belongs to the DTD family. As to quaternary structure, homodimer.

It is found in the cytoplasm. It carries out the reaction glycyl-tRNA(Ala) + H2O = tRNA(Ala) + glycine + H(+). The catalysed reaction is a D-aminoacyl-tRNA + H2O = a tRNA + a D-alpha-amino acid + H(+). Functionally, an aminoacyl-tRNA editing enzyme that deacylates mischarged D-aminoacyl-tRNAs. Also deacylates mischarged glycyl-tRNA(Ala), protecting cells against glycine mischarging by AlaRS. Acts via tRNA-based rather than protein-based catalysis; rejects L-amino acids rather than detecting D-amino acids in the active site. By recycling D-aminoacyl-tRNA to D-amino acids and free tRNA molecules, this enzyme counteracts the toxicity associated with the formation of D-aminoacyl-tRNA entities in vivo and helps enforce protein L-homochirality. This is D-aminoacyl-tRNA deacylase from Salmonella paratyphi C (strain RKS4594).